We begin with the raw amino-acid sequence, 94 residues long: Integration host factor subunit beta (94 aa).

The protein belongs to the bacterial histone-like protein family. Heterodimer of an alpha and a beta chain.

This protein is one of the two subunits of integration host factor, a specific DNA-binding protein that functions in genetic recombination as well as in transcriptional and translational control. This chain is Integration host factor subunit beta, found in Serratia proteamaculans (strain 568).